The sequence spans 134 residues: MTAPEQTFRNKKQRKQQVKLRKPGFAVAKYVRMSPRKVRLVVDVIRGKSVQDAEDLLRFIPRSASEPVAKVLNSAKANALHNDEMLEDRLFVKEAYVDAGPTLKRLIPRARGSANIIKKRTSHITIIVAEKGNK.

This sequence belongs to the universal ribosomal protein uL22 family. In terms of assembly, part of the 50S ribosomal subunit. Contacts protein L32.

Functionally, this protein binds specifically to 23S rRNA; its binding is stimulated by other ribosomal proteins, e.g. L4, L17, and L20. It is important during the early stages of 50S assembly. It makes multiple contacts with different domains of the 23S rRNA in the assembled 50S subunit and ribosome. In terms of biological role, the globular domain of the protein is located by the polypeptide exit tunnel on the outside of the subunit while an extended beta-hairpin forms part of the wall of the tunnel. Forms a pair of 'tweezers' with L32 that hold together two different domains of the 23S rRNA. Interacts with the tunnel-blocking modified macrolide azithromycin. Upon binding of the macrolide troleadomycin to the ribosome, the tip of the beta-hairpin is displaced, which severely restricts the tunnel. This and experiments in E.coli have led to the suggestion that it is part of the gating mechanism involved in translation arrest in the absence of the protein export system. The polypeptide is Large ribosomal subunit protein uL22 (rplV) (Deinococcus radiodurans (strain ATCC 13939 / DSM 20539 / JCM 16871 / CCUG 27074 / LMG 4051 / NBRC 15346 / NCIMB 9279 / VKM B-1422 / R1)).